The primary structure comprises 275 residues: Tryptophan synthase alpha chain (275 aa).

Active-site proton acceptor residues include E58 and D69.

Belongs to the TrpA family. In terms of assembly, tetramer of two alpha and two beta chains. In terms of tissue distribution, ubiquitously expressed at low levels in seedlings, roots, hypocotyls, cotyledons, stems, leaves, inflorescences, flowers, siliques and seeds.

Its subcellular location is the cytoplasm. It carries out the reaction (1S,2R)-1-C-(indol-3-yl)glycerol 3-phosphate + L-serine = D-glyceraldehyde 3-phosphate + L-tryptophan + H2O. The enzyme catalyses (1S,2R)-1-C-(indol-3-yl)glycerol 3-phosphate = indole + D-glyceraldehyde 3-phosphate. It functions in the pathway amino-acid biosynthesis; L-tryptophan biosynthesis; L-tryptophan from chorismate: step 5/5. The alpha subunit is responsible for the aldol cleavage of indoleglycerol phosphate to indole and glyceraldehyde 3-phosphate. Contributes to the tryptophan-independent indole biosynthesis, and possibly to auxin production. The chain is Tryptophan synthase alpha chain (TRPA1) from Arabidopsis thaliana (Mouse-ear cress).